The following is a 299-amino-acid chain: 4-hydroxy-tetrahydrodipicolinate synthase (299 aa).

T47 provides a ligand contact to pyruvate. The active-site Proton donor/acceptor is the Y136. The Schiff-base intermediate with substrate role is filled by K164. A205 is a pyruvate binding site.

Belongs to the DapA family. In terms of assembly, homotetramer; dimer of dimers.

The protein localises to the cytoplasm. It carries out the reaction L-aspartate 4-semialdehyde + pyruvate = (2S,4S)-4-hydroxy-2,3,4,5-tetrahydrodipicolinate + H2O + H(+). It functions in the pathway amino-acid biosynthesis; L-lysine biosynthesis via DAP pathway; (S)-tetrahydrodipicolinate from L-aspartate: step 3/4. Catalyzes the condensation of (S)-aspartate-beta-semialdehyde [(S)-ASA] and pyruvate to 4-hydroxy-tetrahydrodipicolinate (HTPA). This is 4-hydroxy-tetrahydrodipicolinate synthase from Pediococcus pentosaceus (strain ATCC 25745 / CCUG 21536 / LMG 10740 / 183-1w).